The sequence spans 315 residues: Glutaminase (315 aa).

Substrate is bound by residues Ser70, Asn120, Glu166, Asn173, Tyr197, Tyr249, and Val267.

The protein belongs to the glutaminase family. Homotetramer.

The enzyme catalyses L-glutamine + H2O = L-glutamate + NH4(+). The chain is Glutaminase from Sinorhizobium fredii (strain NBRC 101917 / NGR234).